A 487-amino-acid chain; its full sequence is Betaine aldehyde dehydrogenase (487 aa).

Positions 26 and 93 each coordinate K(+). 150-152 contacts NAD(+); the sequence is GAW. The active-site Charge relay system is the K162. NAD(+)-binding positions include 176–179 and 229–232; these read KPSE and SVPT. L244 serves as a coordination point for K(+). The active-site Proton acceptor is E250. Positions 252, 284, and 384 each coordinate NAD(+). The Nucleophile role is filled by C284. Residue C284 is modified to Cysteine sulfenic acid (-SOH). 2 residues coordinate K(+): K454 and G457. E461 (charge relay system) is an active-site residue.

This sequence belongs to the aldehyde dehydrogenase family. In terms of assembly, dimer of dimers. K(+) is required as a cofactor.

It catalyses the reaction betaine aldehyde + NAD(+) + H2O = glycine betaine + NADH + 2 H(+). It functions in the pathway amine and polyamine biosynthesis; betaine biosynthesis via choline pathway; betaine from betaine aldehyde: step 1/1. Involved in the biosynthesis of the osmoprotectant glycine betaine. Catalyzes the irreversible oxidation of betaine aldehyde to the corresponding acid. In Rhizobium etli (strain CIAT 652), this protein is Betaine aldehyde dehydrogenase.